The sequence spans 221 residues: GTP-binding nuclear protein Ran/TC4 (221 aa).

Residues 10–174 (DYPSFKLVIV…LYLARKLAGD (165 aa)) form the Small GTPase Ran-type domain. 21–28 (DGGTGKTT) contacts GTP. The switch-I stretch occupies residues 40–48 (KKYEPTIGV). GTP contacts are provided by residues glycine 71, 125-128 (NKVD), and 153-155 (SAK). The tract at residues 71–87 (GQEKFGGLRDGYYIHGQ) is switch-II.

Belongs to the small GTPase superfamily. Ran family. Found in a nuclear export complex with RanGTP, exportin and pre-miRNA.

The protein localises to the nucleus. Functionally, GTP-binding protein involved in nucleocytoplasmic transport. Required for the import of protein into the nucleus and also for RNA export. Involved in chromatin condensation and control of cell cycle. In Vicia faba (Broad bean), this protein is GTP-binding nuclear protein Ran/TC4.